Here is a 290-residue protein sequence, read N- to C-terminus: uncharacterized protein (290 aa).

The protein localises to the cytoplasm. This is an uncharacterized protein from Saccharomyces cerevisiae (strain ATCC 204508 / S288c) (Baker's yeast).